The sequence spans 340 residues: Methionyl-tRNA formyltransferase (340 aa).

110-113 (SLLP) contributes to the (6S)-5,6,7,8-tetrahydrofolate binding site.

Belongs to the Fmt family.

The enzyme catalyses L-methionyl-tRNA(fMet) + (6R)-10-formyltetrahydrofolate = N-formyl-L-methionyl-tRNA(fMet) + (6S)-5,6,7,8-tetrahydrofolate + H(+). Its function is as follows. Attaches a formyl group to the free amino group of methionyl-tRNA(fMet). The formyl group appears to play a dual role in the initiator identity of N-formylmethionyl-tRNA by promoting its recognition by IF2 and preventing the misappropriation of this tRNA by the elongation apparatus. This chain is Methionyl-tRNA formyltransferase, found in Synechococcus sp. (strain WH7803).